A 444-amino-acid polypeptide reads, in one-letter code: Acyl-CoA 6-desaturase (444 aa).

Residues 1–130 (MGGGGQQTDR…EAEGCFKTQP (130 aa)) lie on the Cytoplasmic side of the membrane. The region spanning 18–95 (FSSYTWEEVQ…LKPLLIGELE (78 aa)) is the Cytochrome b5 heme-binding domain. A helical membrane pass occupies residues 131-151 (LFFALHLGHILLLEAIAFMMV). At 152-157 (WYFGTG) the chain is on the lumenal side. The chain crosses the membrane as a helical span at residues 158–178 (WINTLIVAVILATAQSQAGWL). At 179-264 (QHDFGHLSVF…KHLPYNHQHK (86 aa)) the chain is on the cytoplasmic side. The Histidine box-1 motif lies at 180-184 (HDFGH). The Histidine box-2 signature appears at 217–221 (HFQHH). Residues 265–285 (YFFFIGPPLLIPVYFQFQIFH) traverse the membrane as a helical segment. Residues 286-305 (NMISHGMWVDLLWCISYYVR) lie on the Lumenal side of the membrane. The chain crosses the membrane as a helical span at residues 306–326 (YFLCYTQFYGVFWAIILFNFV). Residues 327 to 444 (RFMESHWFVW…ELWLDAYLNK (118 aa)) lie on the Cytoplasmic side of the membrane. The short motif at 382–386 (QIEHH) is the Histidine box-3 element.

It belongs to the fatty acid desaturase type 1 family.

Its subcellular location is the endoplasmic reticulum membrane. The enzyme catalyses (9Z,12Z)-octadecadienoyl-CoA + 2 Fe(II)-[cytochrome b5] + O2 + 2 H(+) = (6Z,9Z,12Z)-octadecatrienoyl-CoA + 2 Fe(III)-[cytochrome b5] + 2 H2O. It carries out the reaction (9Z,12Z,15Z)-octadecatrienoyl-CoA + 2 Fe(II)-[cytochrome b5] + O2 + 2 H(+) = (6Z,9Z,12Z,15Z)-octadecatetraenoyl-CoA + 2 Fe(III)-[cytochrome b5] + 2 H2O. The catalysed reaction is (8Z,11Z,14Z,17Z)-eicosatetraenoyl-CoA + 2 Fe(II)-[cytochrome b5] + O2 + 2 H(+) = (5Z,8Z,11Z,14Z,17Z)-eicosapentaenoyl-CoA + 2 Fe(III)-[cytochrome b5] + 2 H2O. It catalyses the reaction (8Z,11Z,14Z)-eicosatrienoyl-CoA + 2 Fe(II)-[cytochrome b5] + O2 + 2 H(+) = (5Z,8Z,11Z,14Z)-eicosatetraenoyl-CoA + 2 Fe(III)-[cytochrome b5] + 2 H2O. The protein operates within lipid metabolism; polyunsaturated fatty acid biosynthesis. Its function is as follows. Fatty acid desaturase with bifunctional delta-5 and delta-6 activities. Component of a lipid metabolic pathway that catalyzes the biosynthesis of polyunsaturated fatty acids (PUFA) with preference toward n-3 substrates and Delta-6 function. This Danio rerio (Zebrafish) protein is Acyl-CoA 6-desaturase (fads2).